We begin with the raw amino-acid sequence, 464 residues long: Glutamate--tRNA ligase (464 aa).

A 'HIGH' region motif is present at residues 10–20 (PSPTGHLHLGG). Positions 99, 101, 126, and 128 each coordinate Zn(2+). Positions 236-240 (KLSKR) match the 'KMSKS' region motif. An ATP-binding site is contributed by Lys-239.

It belongs to the class-I aminoacyl-tRNA synthetase family. Glutamate--tRNA ligase type 1 subfamily. In terms of assembly, monomer. The cofactor is Zn(2+).

The protein resides in the cytoplasm. It carries out the reaction tRNA(Glu) + L-glutamate + ATP = L-glutamyl-tRNA(Glu) + AMP + diphosphate. In terms of biological role, catalyzes the attachment of glutamate to tRNA(Glu) in a two-step reaction: glutamate is first activated by ATP to form Glu-AMP and then transferred to the acceptor end of tRNA(Glu). This is Glutamate--tRNA ligase from Oleidesulfovibrio alaskensis (strain ATCC BAA-1058 / DSM 17464 / G20) (Desulfovibrio alaskensis).